The sequence spans 763 residues: Serine/threonine-protein kinase PknG (763 aa).

Residues Met-1–Gln-32 form a disordered region. Residues Tyr-160 to Met-406 form the Protein kinase domain. ATP is bound by residues Ile-166–Val-174 and Lys-190. Asp-289 functions as the Proton acceptor in the catalytic mechanism.

The protein belongs to the protein kinase superfamily. Ser/Thr protein kinase family. Post-translationally, autophosphorylated.

The enzyme catalyses L-seryl-[protein] + ATP = O-phospho-L-seryl-[protein] + ADP + H(+). It catalyses the reaction L-threonyl-[protein] + ATP = O-phospho-L-threonyl-[protein] + ADP + H(+). This is Serine/threonine-protein kinase PknG (pknG) from Mycobacterium leprae (strain TN).